Consider the following 265-residue polypeptide: Protein Exd1 homolog (265 aa).

The 3'-5' exonuclease domain occupies 32–82 (EKQLDRIVLIYQVDTTYHSALKDIKDQKIISLLVEPSFYGRHHPTSILVVA).

Belongs to the EXD1 family. In terms of assembly, homodimer.

Functionally, RNA-binding protein. Inactive exonuclease. The polypeptide is Protein Exd1 homolog (Drosophila melanogaster (Fruit fly)).